The sequence spans 729 residues: Fatty acid oxidation complex subunit alpha (729 aa).

Positions M1–K189 are enoyl-CoA hydratase/isomerase. D296 lines the substrate pocket. The tract at residues E311–A729 is 3-hydroxyacyl-CoA dehydrogenase. NAD(+) contacts are provided by residues M324, D343, V400 to E402, K407, and S429. The active-site For 3-hydroxyacyl-CoA dehydrogenase activity is the H450. Position 453 (N453) interacts with NAD(+). Substrate contacts are provided by N500 and Y660. The interval S708–A729 is disordered.

It in the N-terminal section; belongs to the enoyl-CoA hydratase/isomerase family. The protein in the C-terminal section; belongs to the 3-hydroxyacyl-CoA dehydrogenase family. Heterotetramer of two alpha chains (FadB) and two beta chains (FadA).

The catalysed reaction is a (3S)-3-hydroxyacyl-CoA + NAD(+) = a 3-oxoacyl-CoA + NADH + H(+). It carries out the reaction a (3S)-3-hydroxyacyl-CoA = a (2E)-enoyl-CoA + H2O. The enzyme catalyses a 4-saturated-(3S)-3-hydroxyacyl-CoA = a (3E)-enoyl-CoA + H2O. It catalyses the reaction (3S)-3-hydroxybutanoyl-CoA = (3R)-3-hydroxybutanoyl-CoA. The catalysed reaction is a (3Z)-enoyl-CoA = a 4-saturated (2E)-enoyl-CoA. It carries out the reaction a (3E)-enoyl-CoA = a 4-saturated (2E)-enoyl-CoA. It participates in lipid metabolism; fatty acid beta-oxidation. Functionally, involved in the aerobic and anaerobic degradation of long-chain fatty acids via beta-oxidation cycle. Catalyzes the formation of 3-oxoacyl-CoA from enoyl-CoA via L-3-hydroxyacyl-CoA. It can also use D-3-hydroxyacyl-CoA and cis-3-enoyl-CoA as substrate. This is Fatty acid oxidation complex subunit alpha from Cronobacter sakazakii (strain ATCC BAA-894) (Enterobacter sakazakii).